We begin with the raw amino-acid sequence, 307 residues long: MRTLRIGIVGLGGIAQKAWLPVLTNTAGWTLQGAWSPSRDKALRICESWRIPYVDSLANLASSCDAVFVHSSTASHYAVVSELLNAGVHVCVDKPLAENLRDAERLVALAAQKKLTLMVGFNRRFAPLYRELKTRLGTAASLRMDKHRTDSVGPHDLRFTLLDDYLHVVDTALWLAGGEARLASGTLLTSESGEMCYAEHHFSADKLQITTSMHRRAGSQRESVQAVTDGGLYDVTDMREWREERGQGILIKPIPSWQTTLEQRGFVGCARHFIDCVQNQTVPETAGEQAILAQRVVEALWRDAISE.

It belongs to the Gfo/Idh/MocA family.

The chain is Putative oxidoreductase YceM (yceM) from Salmonella typhimurium (strain LT2 / SGSC1412 / ATCC 700720).